Here is a 209-residue protein sequence, read N- to C-terminus: PRA1 family protein B1 (209 aa).

Alanine 2 is subject to N-acetylalanine. Helical transmembrane passes span 73 to 93, 95 to 115, 133 to 153, 154 to 174, and 185 to 205; these read LAYF…FSLF, HPLS…LYLF, ETLL…SVGS, LLTS…AFVV, and PANA…AAAV.

The protein belongs to the PRA1 family. In terms of assembly, can form homodimer. Interacts with PRA1B2, PRA1B3, PRA1B4, PRA1B5, PRA1B6 and PRA1E.

The protein resides in the endosome membrane. In terms of biological role, may be involved in both secretory and endocytic intracellular trafficking in the endosomal/prevacuolar compartments. The chain is PRA1 family protein B1 (PRA1B1) from Arabidopsis thaliana (Mouse-ear cress).